The primary structure comprises 185 residues: Ribosome-recycling factor (185 aa).

Belongs to the RRF family.

The protein resides in the cytoplasm. In terms of biological role, responsible for the release of ribosomes from messenger RNA at the termination of protein biosynthesis. May increase the efficiency of translation by recycling ribosomes from one round of translation to another. This chain is Ribosome-recycling factor, found in Thermotoga petrophila (strain ATCC BAA-488 / DSM 13995 / JCM 10881 / RKU-1).